The chain runs to 289 residues: 4-diphosphocytidyl-2-C-methyl-D-erythritol kinase (289 aa).

The active site involves K10. Position 94 to 104 (94 to 104) interacts with ATP; sequence PVAAGLAGGSS. D136 is a catalytic residue.

The protein belongs to the GHMP kinase family. IspE subfamily.

The enzyme catalyses 4-CDP-2-C-methyl-D-erythritol + ATP = 4-CDP-2-C-methyl-D-erythritol 2-phosphate + ADP + H(+). Its pathway is isoprenoid biosynthesis; isopentenyl diphosphate biosynthesis via DXP pathway; isopentenyl diphosphate from 1-deoxy-D-xylulose 5-phosphate: step 3/6. In terms of biological role, catalyzes the phosphorylation of the position 2 hydroxy group of 4-diphosphocytidyl-2C-methyl-D-erythritol. In Bacillus cereus (strain G9842), this protein is 4-diphosphocytidyl-2-C-methyl-D-erythritol kinase.